The chain runs to 102 residues: uncharacterized protein (102 aa).

The N-terminal stretch at 1 to 41 (MLFLDSYSLLIQFQRFKNWESPRRFSSSFPLLLFVFKPIFA) is a signal peptide.

This is an uncharacterized protein from Saccharomyces cerevisiae (strain ATCC 204508 / S288c) (Baker's yeast).